Consider the following 551-residue polypeptide: Thermolysin (551 aa).

The N-terminal stretch at 1-31 (MKRKMKMKLVRFGLAAGLAAQVFFLPYNALA) is a signal peptide. A propeptide spans 32-235 (STEHVTWNQQ…DAAKPGDVKS (204 aa)) (activation peptide). Ca(2+) is bound by residues Asp292, Asp294, Gln296, and Asp373. His377 is a binding site for Zn(2+). Residue Glu378 is part of the active site. Zn(2+)-binding residues include His381 and Glu401. Glu412, Asn418, Asp420, Glu422, Glu425, Thr429, Ile432, and Asp435 together coordinate Ca(2+). His466 acts as the Proton donor in catalysis.

The protein belongs to the peptidase M4 family. The cofactor is Ca(2+). It depends on Zn(2+) as a cofactor.

Its subcellular location is the secreted. It carries out the reaction Preferential cleavage: Xaa-|-Leu &gt; Xaa-|-Phe.. Its function is as follows. Extracellular zinc metalloprotease. The polypeptide is Thermolysin (nprS) (Geobacillus stearothermophilus (Bacillus stearothermophilus)).